Consider the following 232-residue polypeptide: Homeobox protein SAX-1 (232 aa).

Disordered stretches follow at residues 1–64, 122–150, and 185–208; these read CLPD…SCAK, KQHPGADGAAAPAPPAAARCSPSPPRPAA, and LLGARVPRASTPRTSENPPRLCPS. The segment at residues 65 to 124 is a DNA-binding region (homeobox); it reads PRRARTAFTYEQLVALENKFRATRYLSVCERLNLALSLSLTETQVKIWFQNRRTKWKKQH. The segment covering 126–142 has biased composition (low complexity); it reads GADGAAAPAPPAAARCS.

This sequence belongs to the NK-1 homeobox family. Transiently expressed in the birth zone of the whole spinal cord regardless of the axial level.

It is found in the nucleus. This Gallus gallus (Chicken) protein is Homeobox protein SAX-1 (SAX1).